A 307-amino-acid chain; its full sequence is Fructokinase (307 aa).

This sequence belongs to the carbohydrate kinase PfkB family.

It carries out the reaction D-fructose + ATP = D-fructose 6-phosphate + ADP + H(+). Involved in sucrose metabolism. This is Fructokinase (scrK) from Klebsiella pneumoniae.